The sequence spans 116 residues: MRVKTGVVRRRRHKKVLKLARGFYSGRRKHFRKAKEQLERSMYYAFRDRKQKKREFRSLWVVRINAACRMHDTSYSRFMHALKVANIELDRKILADMAMNDMQAFKSVLEGVKEHL.

This sequence belongs to the bacterial ribosomal protein bL20 family.

Binds directly to 23S ribosomal RNA and is necessary for the in vitro assembly process of the 50S ribosomal subunit. It is not involved in the protein synthesizing functions of that subunit. This Helicobacter acinonychis (strain Sheeba) protein is Large ribosomal subunit protein bL20.